Here is a 383-residue protein sequence, read N- to C-terminus: Acetylornithine deacetylase (383 aa).

His-80 contributes to the Zn(2+) binding site. Asp-82 is a catalytic residue. A Zn(2+)-binding site is contributed by Asp-112. Glu-144 is an active-site residue. Positions 145, 169, and 355 each coordinate Zn(2+).

It belongs to the peptidase M20A family. ArgE subfamily. In terms of assembly, homodimer. It depends on Zn(2+) as a cofactor. Co(2+) is required as a cofactor. The cofactor is glutathione.

The protein localises to the cytoplasm. It catalyses the reaction N(2)-acetyl-L-ornithine + H2O = L-ornithine + acetate. It participates in amino-acid biosynthesis; L-arginine biosynthesis; L-ornithine from N(2)-acetyl-L-ornithine (linear): step 1/1. Its function is as follows. Catalyzes the hydrolysis of the amide bond of N(2)-acetylated L-amino acids. Cleaves the acetyl group from N-acetyl-L-ornithine to form L-ornithine, an intermediate in L-arginine biosynthesis pathway, and a branchpoint in the synthesis of polyamines. The polypeptide is Acetylornithine deacetylase (Escherichia coli (strain K12 / MC4100 / BW2952)).